The primary structure comprises 457 residues: Methylenetetrahydrofolate--tRNA-(uracil-5-)-methyltransferase TrmFO (457 aa).

Gly-7–Gly-12 is an FAD binding site. The tract at residues Phe-38–Arg-58 is disordered. Basic and acidic residues predominate over residues Ser-40–Arg-52.

Belongs to the MnmG family. TrmFO subfamily. The cofactor is FAD.

It localises to the cytoplasm. It catalyses the reaction uridine(54) in tRNA + (6R)-5,10-methylene-5,6,7,8-tetrahydrofolate + NADH + H(+) = 5-methyluridine(54) in tRNA + (6S)-5,6,7,8-tetrahydrofolate + NAD(+). The catalysed reaction is uridine(54) in tRNA + (6R)-5,10-methylene-5,6,7,8-tetrahydrofolate + NADPH + H(+) = 5-methyluridine(54) in tRNA + (6S)-5,6,7,8-tetrahydrofolate + NADP(+). Functionally, catalyzes the folate-dependent formation of 5-methyl-uridine at position 54 (M-5-U54) in all tRNAs. This chain is Methylenetetrahydrofolate--tRNA-(uracil-5-)-methyltransferase TrmFO, found in Hydrogenobaculum sp. (strain Y04AAS1).